The chain runs to 345 residues: Adenine deaminase (345 aa).

Residues His20, His22, and His204 each contribute to the Zn(2+) site. The active-site Proton donor is Glu207. Asp285 lines the Zn(2+) pocket. Substrate is bound at residue Asp286.

Belongs to the metallo-dependent hydrolases superfamily. Adenosine and AMP deaminases family. Adenine deaminase type 2 subfamily. The cofactor is Zn(2+).

It carries out the reaction adenine + H2O + H(+) = hypoxanthine + NH4(+). In terms of biological role, catalyzes the hydrolytic deamination of adenine to hypoxanthine. Plays an important role in the purine salvage pathway and in nitrogen catabolism. This Ralstonia nicotianae (strain ATCC BAA-1114 / GMI1000) (Ralstonia solanacearum) protein is Adenine deaminase.